The following is a 198-amino-acid chain: Putative pseudouridine methyltransferase (198 aa).

Residues M132 and C186 each contribute to the S-adenosyl-L-methionine site.

It belongs to the methyltransferase superfamily. TrmY family.

The protein resides in the cytoplasm. The chain is Putative pseudouridine methyltransferase from Shewanella baltica (strain OS223).